The following is a 928-amino-acid chain: Kinesin heavy chain (928 aa).

A Kinesin motor domain is found at 7–330 (SIKVVARFRP…LRFGMRAKSI (324 aa)). Residues 88-95 (GQTGAGKS) and 238-245 (GSEKVGKT) contribute to the ATP site. A coiled-coil region spans residues 343–866 (AELKQMLAKA…VKDRLEAAKA (524 aa)). Residues 395–409 (SKSASTTARPSTPSR) show a composition bias toward low complexity. 2 disordered regions span residues 395-434 (SKSA…PLDK) and 893-928 (GGGD…FQKS). Residues 905–928 (NPTIATLQQNPPENKRSSWFFQKS) are compositionally biased toward polar residues.

Belongs to the TRAFAC class myosin-kinesin ATPase superfamily. Kinesin family. Kinesin subfamily.

It is found in the cytoplasm. The protein localises to the cytoskeleton. Its function is as follows. Kinesin is a microtubule-associated force-producing protein that may play a role in organelle transport. Its motor activity is directed toward the microtubule's plus end. In Neurospora crassa (strain ATCC 24698 / 74-OR23-1A / CBS 708.71 / DSM 1257 / FGSC 987), this protein is Kinesin heavy chain (kin).